We begin with the raw amino-acid sequence, 308 residues long: MRLLPEWFLLLFGPWLLRKAVSAQIPESGRPQYLGLRPAAAGAGAPGQQLPEPRSSDGLGVGRAWSWAWPTNHTGALARAGAAGALPAQRTKRKPSIKAARAKKIFGWGDFYFRVHTLKFSLLVTGKIVDHVNGTFSVYFRHNSSSLGNLSVSIVPPSKRVEFGGVWLPGPVPHPLQSTLALEGVLPGLGPPLGMAAAAAGPGLGGSLGGALAGPLGGALGVPGAKESRAFNCHVEYEKTNRARKHRPCLYDPSQVCFTEHTQSQAAWLCAKPFKVICIFVSFLSFDYKLVQKVCPDYNFQSEHPYFG.

Residues methionine 1–alanine 23 form the signal peptide. The interval glutamine 24–glycine 84 is II. The span at alanine 40–proline 51 shows a compositional bias: low complexity. Positions alanine 40–leucine 59 are disordered. Residues asparagine 72, asparagine 133, asparagine 143, and asparagine 149 are each glycosylated (N-linked (GlcNAc...) asparagine). Residues alanine 85–phenylalanine 163 are III. An IV (linker domain) region spans residues glycine 164–glycine 224. The segment at alanine 225–glycine 308 is v (Cys-rich).

It belongs to the neurexophilin family. May be proteolytically processed at the boundary between the N-terminal non-conserved and the central conserved domain in neuron-like cells. As to expression, expressed in brain, spleen, and testis.

The protein resides in the secreted. Functionally, may be signaling molecules that resemble neuropeptides and that act by binding to alpha-neurexins and possibly other receptors. The protein is Neurexophilin-4 (NXPH4) of Homo sapiens (Human).